We begin with the raw amino-acid sequence, 426 residues long: Delta-aminolevulinic acid dehydratase, chloroplastic (426 aa).

Residues 1 to 45 constitute a chloroplast transit peptide; that stretch reads MASTVSFSPANVQMLQGRSCHGHAAFGGCSAVPRTGPRMRSVAVR. The disordered stretch occupies residues 74–107; sequence GRFPAPPPLVRPKAPEGTPQIRPLDLTKRPRRNR. Lys293 serves as the catalytic Schiff-base intermediate with substrate. 5-aminolevulinate is bound by residues Arg303 and Lys315. Glu331 lines the Mg(2+) pocket. Lys346 acts as the Schiff-base intermediate with substrate in catalysis. Residues Ser372 and Tyr411 each contribute to the 5-aminolevulinate site.

It belongs to the ALAD family. In terms of assembly, homooctamer. Mg(2+) serves as cofactor.

Its subcellular location is the plastid. The protein resides in the chloroplast. The enzyme catalyses 2 5-aminolevulinate = porphobilinogen + 2 H2O + H(+). Its pathway is porphyrin-containing compound metabolism; protoporphyrin-IX biosynthesis; coproporphyrinogen-III from 5-aminolevulinate: step 1/4. Functionally, catalyzes an early step in the biosynthesis of tetrapyrroles. Binds two molecules of 5-aminolevulinate per subunit, each at a distinct site, and catalyzes their condensation to form porphobilinogen. In Oryza sativa subsp. japonica (Rice), this protein is Delta-aminolevulinic acid dehydratase, chloroplastic (HEMB).